The chain runs to 139 residues: Small ribosomal subunit protein bS16 (139 aa).

Residues Lys-84–Ala-139 are disordered.

This sequence belongs to the bacterial ribosomal protein bS16 family.

The protein is Small ribosomal subunit protein bS16 of Streptomyces coelicolor (strain ATCC BAA-471 / A3(2) / M145).